The sequence spans 394 residues: Elongation factor Tu (394 aa).

Positions 10-204 (KPHVNIGTIG…AVDSYIPQPI (195 aa)) constitute a tr-type G domain. The segment at 19–26 (GHVDHGKT) is G1. 19 to 26 (GHVDHGKT) is a GTP binding site. T26 lines the Mg(2+) pocket. The segment at 60-64 (GITIS) is G2. The interval 81 to 84 (DCPG) is G3. Residues 81–85 (DCPGH) and 136–139 (NKVD) each bind GTP. Residues 136–139 (NKVD) form a G4 region. Residues 174 to 176 (SAL) are G5.

This sequence belongs to the TRAFAC class translation factor GTPase superfamily. Classic translation factor GTPase family. EF-Tu/EF-1A subfamily. Monomer.

It is found in the cytoplasm. It catalyses the reaction GTP + H2O = GDP + phosphate + H(+). In terms of biological role, GTP hydrolase that promotes the GTP-dependent binding of aminoacyl-tRNA to the A-site of ribosomes during protein biosynthesis. The chain is Elongation factor Tu from Rickettsia typhi (strain ATCC VR-144 / Wilmington).